A 111-amino-acid chain; its full sequence is UPF0060 membrane protein Pden_1837 (111 aa).

4 helical membrane passes run 7 to 27, 30 to 50, 62 to 82, and 91 to 111; these read IAVY…FWAW, LGKS…FAWL, AYAA…WLTE, and ILGG…PRAA.

Belongs to the UPF0060 family.

The protein localises to the cell inner membrane. In Paracoccus denitrificans (strain Pd 1222), this protein is UPF0060 membrane protein Pden_1837.